We begin with the raw amino-acid sequence, 663 residues long: Protein-arginine deiminase type-1 (663 aa).

Residues asparagine 153, aspartate 155, aspartate 157, aspartate 165, aspartate 176, aspartate 179, glutamine 351, glutamate 353, lysine 364, aspartate 371, serine 372, asparagine 375, phenylalanine 409, and leucine 412 each contribute to the Ca(2+) site. Residue cysteine 645 is the Nucleophile of the active site.

It belongs to the protein arginine deiminase family. In terms of assembly, monomer. Ca(2+) is required as a cofactor. Detected in epidermal keratinocytes (at protein level). Epidermis, prostate, testis, placenta, spleen and thymus.

It is found in the cytoplasm. The catalysed reaction is L-arginyl-[protein] + H2O = L-citrullyl-[protein] + NH4(+). Functionally, catalyzes the deimination of arginine residues of proteins. The polypeptide is Protein-arginine deiminase type-1 (PADI1) (Homo sapiens (Human)).